The primary structure comprises 809 residues: Carbon monoxide dehydrogenase large chain (809 aa).

Cysteine 388 contacts Cu(+). Glutamate 763 is a Mo-molybdopterin cytosine dinucleotide binding site.

In terms of assembly, dimer of heterotrimers. Each heterotrimer consists of a large, a medium and a small subunit. Cu(+) is required as a cofactor. The cofactor is Mo-molybdopterin cytosine dinucleotide.

The catalysed reaction is CO + a quinone + H2O = a quinol + CO2. Functionally, catalyzes the oxidation of carbon monoxide to carbon dioxide. In Afipia carboxidovorans (strain ATCC 49405 / DSM 1227 / KCTC 32145 / OM5) (Oligotropha carboxidovorans), this protein is Carbon monoxide dehydrogenase large chain (coxL).